Consider the following 1488-residue polypeptide: WD repeat-containing protein 7 (1488 aa).

7 WD repeats span residues 17–56, 62–104, 156–199, 324–366, 404–443, 462–507, and 558–597; these read APTH…EVNP, GHTA…CIEF, ISPD…SGLQ, VICP…DKQE, NEPL…IVQL, GHRN…MKHI, and RHLF…LDRC. Disordered regions lie at residues 761-781 and 911-947; these read EEED…PEYR and GDHM…QGQI. A compositionally biased stretch (basic and acidic residues) spans 768–781; it reads VMRQRREESDPEYR. A Phosphoserine modification is found at S935. Positions 937–947 are enriched in polar residues; sequence PASSNIVQGQI. 2 WD repeats span residues 1349–1388 and 1390–1430; these read PAIC…CQTI and GHKG…LGSI. S1454 is modified (phosphoserine).

This Rattus norvegicus (Rat) protein is WD repeat-containing protein 7 (Wdr7).